A 688-amino-acid chain; its full sequence is Zinc finger CCCH domain-containing protein 22 (688 aa).

The disordered stretch occupies residues 62-123 (ALLPPPPPPS…QPFSRSNGSV (62 aa)). Residues 101–117 (PLSASSPSSWAQAQPFS) show a composition bias toward low complexity. The C3H1-type zinc-finger motif lies at 233–260 (GFGWKPCLYYARGFCKNGSSCRFVHGDD). Residues 366–442 (RQIYLTFPAD…RVLVKPYKEK (77 aa)) form the RRM domain. A coiled-coil region spans residues 487 to 522 (TNEMMLRRKLEEQQQAAELQQAIELHSRRLMDLQLL). Residues 552-624 (LATTMVESPP…PTKSSVSAHQ (73 aa)) form a disordered region. Residues 574 to 589 (TEERKMVNGGGDKEES) show a composition bias toward basic and acidic residues. The span at 613–624 (ASPTKSSVSAHQ) shows a compositional bias: polar residues.

This is Zinc finger CCCH domain-containing protein 22 from Oryza sativa subsp. japonica (Rice).